The sequence spans 456 residues: Adenylyltransferase and sulfurtransferase uba4 (456 aa).

Residues Gly-101, Asp-122, 129–133 (SNLHR), Lys-146, and 161–162 (DH) contribute to the ATP site. Residues Cys-210 and Cys-213 each coordinate Zn(2+). Cys-227 acts as the Glycyl thioester intermediate; for adenylyltransferase activity in catalysis. Cys-300 and Cys-303 together coordinate Zn(2+). In terms of domain architecture, Rhodanese spans 350-454 (KEKEHLLIDV…WKEQVDGSWP (105 aa)). Cys-409 functions as the Cysteine persulfide intermediate; for sulfurtransferase activity in the catalytic mechanism.

In the N-terminal section; belongs to the HesA/MoeB/ThiF family. UBA4 subfamily. Zn(2+) is required as a cofactor.

It is found in the cytoplasm. Its subcellular location is the cytosol. The catalysed reaction is [molybdopterin-synthase sulfur-carrier protein]-C-terminal Gly-Gly + ATP + H(+) = [molybdopterin-synthase sulfur-carrier protein]-C-terminal Gly-Gly-AMP + diphosphate. It carries out the reaction [molybdopterin-synthase sulfur-carrier protein]-C-terminal Gly-Gly-AMP + S-sulfanyl-L-cysteinyl-[cysteine desulfurase] + AH2 = [molybdopterin-synthase sulfur-carrier protein]-C-terminal-Gly-aminoethanethioate + L-cysteinyl-[cysteine desulfurase] + A + AMP + 2 H(+). It participates in tRNA modification; 5-methoxycarbonylmethyl-2-thiouridine-tRNA biosynthesis. Plays a central role in 2-thiolation of mcm(5)S(2)U at tRNA wobble positions of cytosolic tRNA(Lys), tRNA(Glu) and tRNA(Gln). Also essential during biosynthesis of the molybdenum cofactor. Acts by mediating the C-terminal thiocarboxylation of sulfur carriers urm1 and mocs2a. Its N-terminus first activates urm1 and mocs2a as acyl-adenylates (-COAMP), then the persulfide sulfur on the catalytic cysteine is transferred to urm1 and mocs2a to form thiocarboxylation (-COSH) of their C-terminus. The reaction probably involves hydrogen sulfide that is generated from the persulfide intermediate and that acts as a nucleophile towards urm1 and mocs2a. Subsequently, a transient disulfide bond is formed. Does not use thiosulfate as sulfur donor; nfs1 probably acting as a sulfur donor for thiocarboxylation reactions. The protein is Adenylyltransferase and sulfurtransferase uba4 of Sclerotinia sclerotiorum (strain ATCC 18683 / 1980 / Ss-1) (White mold).